The primary structure comprises 801 residues: Bromodomain-containing protein 2 (801 aa).

M1 carries the N-acetylmethionine modification. Position 6 is a phosphothreonine (T6). S37 is modified (phosphoserine). A disordered region spans residues 53 to 73 (ALQLTPANPPPPEVSNPKKPG). The 107-residue stretch at 74–180 (RVTNQLQYLH…KIFLQKVASM (107 aa)) folds into the Bromo 1 domain. Positions 112, 155, 156, 157, 160, and 161 each coordinate a protein. 3 disordered regions span residues 268 to 349 (PPAQ…LSEQ), 456 to 647 (EPLE…YDEK), and 737 to 801 (EKRL…SDSG). Over residues 285 to 298 (TTTPTPTAILAPGS) the composition is skewed to low complexity. Residues S298, S301, and S305 each carry the phosphoserine modification. The segment covering 316 to 332 (MRRESGRPIKPPRKDLP) has biased composition (basic and acidic residues). A Bromo 2 domain is found at 344–453 (GKLSEQLKHC…DVFEFRYAKM (110 aa)). Acidic residues predominate over residues 481-514 (SSEESSSESSSEEEEEEDEEDEEEEESESSDSEE). The segment covering 544-566 (KPKRKREKKEKKKKRKAEKHRGR) has biased composition (basic residues). Residues 555 to 559 (KKKRK) carry the Nuclear localization signal motif. Positions 592–612 (GSGGGSAALGPSGFGPSGGSG) are enriched in gly residues. Residues 632-714 (DSEEEEESRP…SCLRKKPRKP (83 aa)) enclose the NET domain. At S633 the chain carries Phosphoserine. The segment covering 763–795 (SSSAQQVAVSRLSASSSSSDSSSSSSSSSSSDT) has biased composition (low complexity).

The protein belongs to the BET family. Homodimer. Interacts with E2F1. Interacts with (acetylated) STAT3; promoting STAT3 recruitment to chromatin. Interacts with CTCF; promoting BRD2 recruitment to chromatin. As to quaternary structure, (Microbial infection) Interacts with herpes virus 8 protein LANA1.

It localises to the nucleus. The protein resides in the chromosome. With respect to regulation, inhibited by JQ1, a thieno-triazolo-1,4-diazepine derivative, which specifically inhibits members of the BET family (BRD2, BRD3 and BRD4). The first bromo domain is inhibited by GSK778 (iBET-BD1), which specifically inhibits the first bromo domain of members of the BET family (BRD2, BRD3 and BRD4). The second bromo domain is inhibited by ABBV-744, which specifically inhibits the second bromo domain of members of the BET family (BRD2, BRD3 and BRD4). The second bromo domain is inhibited by GSK046 (iBET-BD2), which specifically inhibits the second bromo domain of members of the BET family (BRD2, BRD3 and BRD4). Chromatin reader protein that specifically recognizes and binds histone H4 acetylated at 'Lys-5' and 'Lys-12' (H4K5ac and H4K12ac, respectively), thereby controlling gene expression and remodeling chromatin structures. Recruits transcription factors and coactivators to target gene sites, and activates RNA polymerase II machinery for transcriptional elongation. Plays a key role in genome compartmentalization via its association with CTCF and cohesin: recruited to chromatin by CTCF and promotes formation of topologically associating domains (TADs) via its ability to bind acetylated histones, contributing to CTCF boundary formation and enhancer insulation. Also recognizes and binds acetylated non-histone proteins, such as STAT3. Involved in inflammatory response by regulating differentiation of naive CD4(+) T-cells into T-helper Th17: recognizes and binds STAT3 acetylated at 'Lys-87', promoting STAT3 recruitment to chromatin. In addition to acetylated lysines, also recognizes and binds lysine residues on histones that are both methylated and acetylated on the same side chain to form N6-acetyl-N6-methyllysine (Kacme), an epigenetic mark of active chromatin associated with increased transcriptional initiation. Specifically binds histone H4 acetyl-methylated at 'Lys-5' and 'Lys-12' (H4K5acme and H4K12acme, respectively). In Homo sapiens (Human), this protein is Bromodomain-containing protein 2.